Reading from the N-terminus, the 456-residue chain is Arginine biosynthesis bifunctional protein ArgJ, mitochondrial (456 aa).

Substrate is bound by residues T184, K213, T224, E311, N451, and T456. T224 acts as the Nucleophile in catalysis.

This sequence belongs to the ArgJ family. As to quaternary structure, heterodimer of an alpha and a beta chain. Post-translationally, the alpha and beta chains are autoproteolytically processed from a single precursor protein within the mitochondrion.

Its subcellular location is the mitochondrion matrix. It carries out the reaction N(2)-acetyl-L-ornithine + L-glutamate = N-acetyl-L-glutamate + L-ornithine. The catalysed reaction is L-glutamate + acetyl-CoA = N-acetyl-L-glutamate + CoA + H(+). The protein operates within amino-acid biosynthesis; L-arginine biosynthesis; L-ornithine and N-acetyl-L-glutamate from L-glutamate and N(2)-acetyl-L-ornithine (cyclic): step 1/1. It participates in amino-acid biosynthesis; L-arginine biosynthesis; N(2)-acetyl-L-ornithine from L-glutamate: step 1/4. Functionally, catalyzes two activities which are involved in the cyclic version of arginine biosynthesis: the synthesis of acetylglutamate from glutamate and acetyl-CoA, and of ornithine by transacetylation between acetylornithine and glutamate. This Aspergillus niger (strain ATCC MYA-4892 / CBS 513.88 / FGSC A1513) protein is Arginine biosynthesis bifunctional protein ArgJ, mitochondrial.